The primary structure comprises 147 residues: Hemoglobin subunit beta-3 (147 aa).

The 146-residue stretch at 2-147 (EWTDAERTAI…VTSALSRQYH (146 aa)) folds into the Globin domain. Heme b-binding residues include H63 and H92.

This sequence belongs to the globin family. Heterotetramer of two alpha chains and two beta chains. As to expression, red blood cells.

Functionally, involved in oxygen transport from gills to the various peripheral tissues. In Muraena helena (Mediterranean moray), this protein is Hemoglobin subunit beta-3 (hbb3).